The sequence spans 505 residues: Cytochrome P450 monooxygenase FGM1 (505 aa).

Residues 1–23 form the signal peptide; it reads MPLILSITSSGTVLVLLTLLSLA. N188 and N351 each carry an N-linked (GlcNAc...) asparagine glycan. Residue C450 participates in heme binding.

The protein belongs to the cytochrome P450 family. Heme serves as cofactor.

The protein operates within secondary metabolite biosynthesis. Its function is as follows. Cytochrome P450 monooxygenase; part of the Fg3_54/C64 gene cluster that mediates the biosynthesis of the octapeptide fusaoctaxin A, a virulence factor that is required for cell-to-cell invasiveness of plant host. The 2 nonribosomal peptide synthetases NRPS9 and NRPS5 form an assembly line which likely utilizes GABA as a starter unit (loaded on the unique module M1 of NRPS9) and sequentially incorporates seven extender units composed of the residues L-Ala, L-allo-Ile, L-Ser, L-Val, L-Ser, L-Leu and L-Leu, respectively. During the process, each of the residues that are tethered on modules M3-M7 of NRPS5 containing an E domain can undergo an epimerization reaction to produce a D-configuration before the transpeptidation reaction occurs. The elongation of the peptidyl chain might be terminated by module M8-mediated L-Leu incorporation, followed by R domain-catalyzed 4 electron reduction to release the resulting octapeptide from the assembly line as an alcohol. Fusaoctaxin A is cleaved by the cluster specific ABC transporter FGM5 to the pentapeptide fusapentaxin A and the tripeptide fusatrixin A. The other enzymes from the cluster, FGM1, FGM2, FGM3 and FGM9 seem not to be involved in the biosynthesis of fusaoctaxin A and their functions have still to be determined. The chain is Cytochrome P450 monooxygenase FGM1 from Gibberella zeae (strain ATCC MYA-4620 / CBS 123657 / FGSC 9075 / NRRL 31084 / PH-1) (Wheat head blight fungus).